The following is a 612-amino-acid chain: Probable translation initiation factor IF-2 (612 aa).

The region spanning 11 to 229 (LRQPIVVVLG…VLAGLTQRYL (219 aa)) is the tr-type G domain. Residues 20 to 27 (GHVDHGKT) are G1. A GTP-binding site is contributed by 20–27 (GHVDHGKT). Residues 45-49 (LITQH) form a G2 region. The tract at residues 84–87 (DTPG) is G3. GTP contacts are provided by residues 84–88 (DTPGH) and 138–141 (NKID). The interval 138-141 (NKID) is G4. The interval 207–209 (SAK) is G5.

The protein belongs to the TRAFAC class translation factor GTPase superfamily. Classic translation factor GTPase family. IF-2 subfamily.

In terms of biological role, function in general translation initiation by promoting the binding of the formylmethionine-tRNA to ribosomes. Seems to function along with eIF-2. The protein is Probable translation initiation factor IF-2 of Hyperthermus butylicus (strain DSM 5456 / JCM 9403 / PLM1-5).